The primary structure comprises 661 residues: UvrABC system protein B (661 aa).

In terms of domain architecture, Helicase ATP-binding spans 25 to 182; it reads AGLNSKKRSQ…NDLINLQYKR (158 aa). 38-45 contributes to the ATP binding site; that stretch reads GITGSGKT. Positions 91–114 match the Beta-hairpin motif; that stretch reads YYDYYQPEAYIARTDTFIEKDSSI. The 163-residue stretch at 430-592 folds into the Helicase C-terminal domain; it reads QVEDLISEIQ…IIPKTINRAI (163 aa). The 36-residue stretch at 621–656 folds into the UVR domain; the sequence is KANINKLNKEMLKAASNLEFEQAAKLRDQLKTLEAA.

The protein belongs to the UvrB family. Forms a heterotetramer with UvrA during the search for lesions. Interacts with UvrC in an incision complex.

It localises to the cytoplasm. In terms of biological role, the UvrABC repair system catalyzes the recognition and processing of DNA lesions. A damage recognition complex composed of 2 UvrA and 2 UvrB subunits scans DNA for abnormalities. Upon binding of the UvrA(2)B(2) complex to a putative damaged site, the DNA wraps around one UvrB monomer. DNA wrap is dependent on ATP binding by UvrB and probably causes local melting of the DNA helix, facilitating insertion of UvrB beta-hairpin between the DNA strands. Then UvrB probes one DNA strand for the presence of a lesion. If a lesion is found the UvrA subunits dissociate and the UvrB-DNA preincision complex is formed. This complex is subsequently bound by UvrC and the second UvrB is released. If no lesion is found, the DNA wraps around the other UvrB subunit that will check the other stand for damage. This is UvrABC system protein B from Rickettsia akari (strain Hartford).